An 87-amino-acid chain; its full sequence is Lipid-anchored plasma membrane protein uvi15 (87 aa).

Residues 1-64 (MSAQQFYGDK…MYVQQPQASD (64 aa)) are disordered. The span at 18–41 (QQAYGGPNYYPPQQNYPQQGYAPP) shows a compositional bias: low complexity.

This sequence belongs to the CYSTM1 family. Post-translationally, palmitoylated.

Its subcellular location is the cell membrane. The protein localises to the cell tip. Required for the maintenance of viability of cells in stationary phase and in starvation conditions. This Schizosaccharomyces pombe (strain 972 / ATCC 24843) (Fission yeast) protein is Lipid-anchored plasma membrane protein uvi15 (uvi15).